The primary structure comprises 144 residues: Deoxyuridine 5'-triphosphate nucleotidohydrolase (144 aa).

Substrate is bound by residues 63 to 65 (RSG), N76, and 80 to 82 (TVD).

It belongs to the dUTPase family. It depends on Mg(2+) as a cofactor.

It carries out the reaction dUTP + H2O = dUMP + diphosphate + H(+). It functions in the pathway pyrimidine metabolism; dUMP biosynthesis; dUMP from dCTP (dUTP route): step 2/2. In terms of biological role, this enzyme is involved in nucleotide metabolism: it produces dUMP, the immediate precursor of thymidine nucleotides and it decreases the intracellular concentration of dUTP so that uracil cannot be incorporated into DNA. This is Deoxyuridine 5'-triphosphate nucleotidohydrolase from Treponema denticola (strain ATCC 35405 / DSM 14222 / CIP 103919 / JCM 8153 / KCTC 15104).